Here is a 761-residue protein sequence, read N- to C-terminus: Complement factor B (761 aa).

The first 22 residues, 1–22 (MESPQLCLVLLVLGFSSGGVSA), serve as a signal peptide directing secretion. Sushi domains are found at residues 32-97 (VSCS…ECRA), 98-157 (IRCP…ICDD), and 160-217 (GYCP…SCQD). 6 disulfides stabilise this stretch: C34–C73, C59–C95, C100–C142, C128–C155, C162–C202, and C188–C215. Residues N119 and N139 are each glycosylated (N-linked (GlcNAc...) asparagine). The VWFA domain maps to 267–466 (NIYLVLDGSD…DLENVFYQMI (200 aa)). Residues S275 and S277 each contribute to the Mg(2+) site. Residue N282 is glycosylated (N-linked (GlcNAc...) asparagine). T350 is a Mg(2+) binding site. N-linked (GlcNAc...) asparagine glycosylation occurs at N375. Positions 474–754 (LCGMVWEHKK…VLPWLKDKLK (281 aa)) constitute a Peptidase S1 domain. Disulfide bonds link C475/C593, C508/C524, C596/C612, C653/C679, and C692/C722. Catalysis depends on charge relay system residues H523 and D573. Catalysis depends on S696, which acts as the Charge relay system.

Belongs to the peptidase S1 family. As to quaternary structure, monomer. Interacts with complement C3b; this interaction is dependent on the presence of Mg(2+). Catalytic component of the C3 convertase of the alternative complement pathway, also named C3bBb, composed of complement factor B Bb and complement C3b. Catalytic component of the C5 convertase of the alternative complement pathway, also named C3bBb3b, composed of complement factor B Bb and additional molecules of complement C3b. Interacts to CFP; this interaction contributes to the stabilization of the active C3-convertase enzyme complex. Requires Mg(2+) as cofactor. Mn(2+) is required as a cofactor. Post-translationally, cleaved by CFD following activation of the alternative complement system, generating Ba and Bb chains. Cleavage and activation takes place when CFB is already associated with complement C3b.

Its subcellular location is the secreted. It is found in the cell surface. The catalysed reaction is Cleavage of Arg-|-Ser bond in complement component C3 alpha-chain to yield C3a and C3b, and Arg-|-Xaa bond in complement component C5 alpha-chain to yield C5a and C5b.. Functionally, precursor of the catalytic component of the C3 and C5 convertase complexes of the alternative pathway of the complement system, a cascade of proteins that leads to phagocytosis and breakdown of pathogens and signaling that strengthens the adaptive immune system. The alternative complement pathway acts as an amplification loop that enhances other complement pathways (classical, lectin and GZMK) by promoting formation of additional C3 and C5 convertases. CFB is cleaved and activated by CFD to generate Ba and Bb chains; Bb chain constituting the catalytic component of the C3 and C5 convertases. Its function is as follows. Serine protease component of the complement C3 and C5 convertase complexes of the alternative complement pathway. Following cleavage and activation by factor D (CFD), forms the C3 convertase together with complement C3b. As part of the C3 convertase, cleaves and activates C3 into C3a anaphylatoxin and C3b opsonin, the next components of the complement pathways. When an additional complement C3b molecule binds to the C3 convertase, forms the C5 convertase, which cleaves and activates C5 into C5a anaphylatoxin and C5b component of the membrane attack complex. Involved in proliferation and differentiation of preactivated B-lymphocytes, rapid spreading of peripheral blood monocytes, stimulation of lymphocyte blastogenesis and lysis of erythrocytes. The sequence is that of Complement factor B (Cfb) from Mus musculus (Mouse).